The chain runs to 235 residues: Kinetochore protein Spc25 (235 aa).

The stretch at 44–106 (KNILSAKEAI…DMEAQLLRHT (63 aa)) forms a coiled coil. Residues 193–216 (EVAGASPVTPSGSERPKATSKHSN) form a disordered region.

This sequence belongs to the SPC25 family. Component of the Ndc80 complex, which is composed of Ndc80, Nuf2 and Spc25.

It is found in the nucleus. Its subcellular location is the chromosome. The protein localises to the centromere. The protein resides in the kinetochore. Acts as a component of the essential kinetochore-associated Ndc80 complex, which is required for chromosome segregation and spindle checkpoint activity during meiosis and mitosis. Required for kinetochore integrity and the organization of stable microtubule binding sites in the outer plate of the kinetochore. Participates in SAC signaling that responds specifically to disruptions in spindle microtubule dynamics. The NDC80 complex synergistically enhances the affinity of the SKA1 complex for microtubules and may allow the NDC80 complex to track depolymerizing microtubules. The chain is Kinetochore protein Spc25 from Drosophila pseudoobscura pseudoobscura (Fruit fly).